The sequence spans 548 residues: ATP synthase subunit alpha, mitochondrial (548 aa).

209 to 216 provides a ligand contact to ATP; sequence GDRQTGKT.

The protein belongs to the ATPase alpha/beta chains family. In terms of assembly, F-type ATPases have 2 components, CF(1) - the catalytic core - and CF(0) - the membrane proton channel. CF(1) has five subunits: alpha(3), beta(3), gamma(1), delta(1), epsilon(1). CF(0) has three main subunits: a, b and c.

The protein localises to the mitochondrion. The protein resides in the mitochondrion inner membrane. In terms of biological role, mitochondrial membrane ATP synthase (F(1)F(0) ATP synthase or Complex V) produces ATP from ADP in the presence of a proton gradient across the membrane which is generated by electron transport complexes of the respiratory chain. F-type ATPases consist of two structural domains, F(1) - containing the extramembraneous catalytic core, and F(0) - containing the membrane proton channel, linked together by a central stalk and a peripheral stalk. During catalysis, ATP synthesis in the catalytic domain of F(1) is coupled via a rotary mechanism of the central stalk subunits to proton translocation. Subunits alpha and beta form the catalytic core in F(1). Rotation of the central stalk against the surrounding alpha(3)beta(3) subunits leads to hydrolysis of ATP in three separate catalytic sites on the beta subunits. Subunit alpha does not bear the catalytic high-affinity ATP-binding sites. The polypeptide is ATP synthase subunit alpha, mitochondrial (ATP1) (Kluyveromyces lactis (strain ATCC 8585 / CBS 2359 / DSM 70799 / NBRC 1267 / NRRL Y-1140 / WM37) (Yeast)).